The chain runs to 283 residues: Bifunctional protein FolD (283 aa).

NADP(+) is bound by residues glycine 164–serine 166, serine 189, and isoleucine 230.

This sequence belongs to the tetrahydrofolate dehydrogenase/cyclohydrolase family. In terms of assembly, homodimer.

It carries out the reaction (6R)-5,10-methylene-5,6,7,8-tetrahydrofolate + NADP(+) = (6R)-5,10-methenyltetrahydrofolate + NADPH. The catalysed reaction is (6R)-5,10-methenyltetrahydrofolate + H2O = (6R)-10-formyltetrahydrofolate + H(+). It participates in one-carbon metabolism; tetrahydrofolate interconversion. Functionally, catalyzes the oxidation of 5,10-methylenetetrahydrofolate to 5,10-methenyltetrahydrofolate and then the hydrolysis of 5,10-methenyltetrahydrofolate to 10-formyltetrahydrofolate. In Lactobacillus delbrueckii subsp. bulgaricus (strain ATCC 11842 / DSM 20081 / BCRC 10696 / JCM 1002 / NBRC 13953 / NCIMB 11778 / NCTC 12712 / WDCM 00102 / Lb 14), this protein is Bifunctional protein FolD.